We begin with the raw amino-acid sequence, 55 residues long: MPKNNTNENFQSGAGLIRYFNEEEIKGPALDPKLIIYIGIAMAVIVELAKIFWPV.

The Cytoplasmic portion of the chain corresponds to 1-31 (MPKNNTNENFQSGAGLIRYFNEEEIKGPALD). Residues 32–51 (PKLIIYIGIAMAVIVELAKI) traverse the membrane as a helical segment. Over 52–55 (FWPV) the chain is Extracellular.

The protein belongs to the SEC61-beta family. Component of the protein translocase complex. Heterotrimer consisting of alpha (SecY), beta (SecG) and gamma (SecE) subunits. Can form oligomers of the heterotrimer.

The protein localises to the cell membrane. Involved in protein export. The function of the beta subunit is unknown, but it may be involved in stabilization of the trimeric complex. In Picrophilus torridus (strain ATCC 700027 / DSM 9790 / JCM 10055 / NBRC 100828 / KAW 2/3), this protein is Preprotein translocase subunit SecG.